The chain runs to 843 residues: Protein P (843 aa).

A terminal protein domain (TP) region spans residues 1 to 177 (MPLSYQHFRK…FCGSPYSWEQ (177 aa)). The spacer stretch occupies residues 178 to 346 (ELQHGRLVFQ…YCLTHIVNLL (169 aa)). Residues 347 to 690 (EDWGPCTEHG…YLHLYPVARQ (344 aa)) are polymerase/reverse transcriptase domain (RT). Positions 357–600 (EHNIRIPRTP…YSLNFMGYVI (244 aa)) constitute a Reverse transcriptase domain. Positions 429, 551, and 552 each coordinate Mg(2+).

This sequence belongs to the hepadnaviridae P protein family.

The catalysed reaction is DNA(n) + a 2'-deoxyribonucleoside 5'-triphosphate = DNA(n+1) + diphosphate. It carries out the reaction Endonucleolytic cleavage to 5'-phosphomonoester.. With respect to regulation, activated by host HSP70 and HSP40 in vitro to be able to bind the epsilon loop of the pgRNA. Because deletion of the RNase H region renders the protein partly chaperone-independent, the chaperones may be needed indirectly to relieve occlusion of the RNA-binding site by this domain. Inhibited by several reverse-transcriptase inhibitors: Lamivudine, Adefovir and Entecavir. Multifunctional enzyme that converts the viral RNA genome into dsDNA in viral cytoplasmic capsids. This enzyme displays a DNA polymerase activity that can copy either DNA or RNA templates, and a ribonuclease H (RNase H) activity that cleaves the RNA strand of RNA-DNA heteroduplexes in a partially processive 3'- to 5'-endonucleasic mode. Neo-synthesized pregenomic RNA (pgRNA) are encapsidated together with the P protein, and reverse-transcribed inside the nucleocapsid. Initiation of reverse-transcription occurs first by binding the epsilon loop on the pgRNA genome, and is initiated by protein priming, thereby the 5'-end of (-)DNA is covalently linked to P protein. Partial (+)DNA is synthesized from the (-)DNA template and generates the relaxed circular DNA (RC-DNA) genome. After budding and infection, the RC-DNA migrates in the nucleus, and is converted into a plasmid-like covalently closed circular DNA (cccDNA). The activity of P protein does not seem to be necessary for cccDNA generation, and is presumably released from (+)DNA by host nuclear DNA repair machinery. The chain is Protein P from Hepatitis B virus genotype C subtype adr (isolate Japan/Nishioka/1983) (HBV-C).